The chain runs to 225 residues: Large ribosomal subunit protein uL1 (225 aa).

Belongs to the universal ribosomal protein uL1 family. Part of the 50S ribosomal subunit.

Its function is as follows. Binds directly to 23S rRNA. Probably involved in E site tRNA release. Protein L1 is also a translational repressor protein, it controls the translation of its operon by binding to its mRNA. This is Large ribosomal subunit protein uL1 from Thermofilum pendens (strain DSM 2475 / Hrk 5).